A 342-amino-acid polypeptide reads, in one-letter code: tRNA N6-adenosine threonylcarbamoyltransferase (342 aa).

Positions 114 and 118 each coordinate Fe cation. Substrate-binding positions include 136 to 140 (LVSGG), Asp169, Gly182, Asp186, and Asn275. Position 301 (Asp301) interacts with Fe cation.

Belongs to the KAE1 / TsaD family. Requires Fe(2+) as cofactor.

Its subcellular location is the cytoplasm. The enzyme catalyses L-threonylcarbamoyladenylate + adenosine(37) in tRNA = N(6)-L-threonylcarbamoyladenosine(37) in tRNA + AMP + H(+). Functionally, required for the formation of a threonylcarbamoyl group on adenosine at position 37 (t(6)A37) in tRNAs that read codons beginning with adenine. Is involved in the transfer of the threonylcarbamoyl moiety of threonylcarbamoyl-AMP (TC-AMP) to the N6 group of A37, together with TsaE and TsaB. TsaD likely plays a direct catalytic role in this reaction. The chain is tRNA N6-adenosine threonylcarbamoyltransferase from Streptococcus pyogenes serotype M4 (strain MGAS10750).